The primary structure comprises 205 residues: Thymidine kinase (205 aa).

ATP contacts are provided by residues 9–16 and 87–90; these read SAMNAGKS and DECQ. The active-site Proton acceptor is Glu88. Cys145, Cys147, Cys182, and His185 together coordinate Zn(2+).

The protein belongs to the thymidine kinase family. In terms of assembly, homotetramer.

It is found in the cytoplasm. The enzyme catalyses thymidine + ATP = dTMP + ADP + H(+). This Shigella dysenteriae serotype 1 (strain Sd197) protein is Thymidine kinase.